Consider the following 128-residue polypeptide: Ribonuclease P protein component (128 aa).

Belongs to the RnpA family. Consists of a catalytic RNA component (M1 or rnpB) and a protein subunit.

It catalyses the reaction Endonucleolytic cleavage of RNA, removing 5'-extranucleotides from tRNA precursor.. RNaseP catalyzes the removal of the 5'-leader sequence from pre-tRNA to produce the mature 5'-terminus. It can also cleave other RNA substrates such as 4.5S RNA. The protein component plays an auxiliary but essential role in vivo by binding to the 5'-leader sequence and broadening the substrate specificity of the ribozyme. The chain is Ribonuclease P protein component from Methylococcus capsulatus (strain ATCC 33009 / NCIMB 11132 / Bath).